The sequence spans 425 residues: Elongation factor 1-alpha (425 aa).

The tr-type G domain occupies 5-221 (KPHMNLAVIG…DLFKMPDMPT (217 aa)). Positions 14–21 (GHIDHGKS) are G1. Residue 14 to 21 (GHIDHGKS) participates in GTP binding. Ser21 contacts Mg(2+). Residues 70-74 (GITID) form a G2 region. The tract at residues 91-94 (DCPG) is G3. GTP is bound by residues 91–95 (DCPGH) and 146–149 (NKMD). A G4 region spans residues 146–149 (NKMD). Residues 185 to 187 (SAF) are G5.

The protein belongs to the TRAFAC class translation factor GTPase superfamily. Classic translation factor GTPase family. EF-Tu/EF-1A subfamily.

It localises to the cytoplasm. It carries out the reaction GTP + H2O = GDP + phosphate + H(+). In terms of biological role, GTP hydrolase that promotes the GTP-dependent binding of aminoacyl-tRNA to the A-site of ribosomes during protein biosynthesis. The polypeptide is Elongation factor 1-alpha (Methanocorpusculum labreanum (strain ATCC 43576 / DSM 4855 / Z)).